The sequence spans 261 residues: Kallikrein-1E2 (261 aa).

A signal peptide spans 1-17; the sequence is MWFLVLCLDLSLGETGA. Residues 18–24 constitute a propeptide, activation peptide; that stretch reads LPPIQSR. In terms of domain architecture, Peptidase S1 spans 25–258; it reads IIGGWECEKH…HLKWIKETIE (234 aa). 5 cysteine pairs are disulfide-bonded: Cys31/Cys173, Cys50/Cys66, Cys152/Cys219, Cys184/Cys198, and Cys209/Cys234. His65 acts as the Charge relay system in catalysis. The N-linked (GlcNAc...) asparagine glycan is linked to Asn79. Asp120 functions as the Charge relay system in the catalytic mechanism. Ser213 acts as the Charge relay system in catalysis.

It belongs to the peptidase S1 family. Kallikrein subfamily. As to expression, detected in prostate and semen.

The protein resides in the secreted. It carries out the reaction Preferential cleavage of Arg-|-Xaa bonds in small molecule substrates. Highly selective action to release kallidin (lysyl-bradykinin) from kininogen involves hydrolysis of Met-|-Xaa or Leu-|-Xaa.. In terms of biological role, glandular kallikreins cleave Met-Lys and Arg-Ser bonds in kininogen to release Lys-bradykinin. This Equus caballus (Horse) protein is Kallikrein-1E2 (KLK1E2).